The primary structure comprises 208 residues: CASP-like protein 3A1 (208 aa).

Composition is skewed to polar residues over residues 1–11 (MGSFANGQNGS) and 17–33 (TPAT…TTSA). The disordered stretch occupies residues 1–33 (MGSFANGQNGSELGIQTPATGSNAALEPPTTSA). Residues 1–43 (MGSFANGQNGSELGIQTPATGSNAALEPPTTSAAAPRCPRLGM) lie on the Cytoplasmic side of the membrane. The helical transmembrane segment at 44–64 (AMVAARAAALVMALLSVSLMV) threads the bilayer. Residues 65–92 (SAKQRGTLAIFGIEIPLYAKWSLSDSLQ) are Extracellular-facing. The chain crosses the membrane as a helical span at residues 93-113 (SLVGISAAAAAYSLAQLLSIA). Over 114-128 (HTALKKAPVVPSRRY) the chain is Cytoplasmic. Residues 129-149 (AWMLLAGDQVFAYAMLSAGSA) traverse the membrane as a helical segment. Residues 150-183 (AAAVANLNRTGVRHTALPNFCKPLPRFCDLSAAS) lie on the Extracellular side of the membrane. An N-linked (GlcNAc...) asparagine glycan is attached at N157. The chain crosses the membrane as a helical span at residues 184 to 204 (IACAFLGCAFLAASAVIDVIW). Over 205-208 (LSRL) the chain is Cytoplasmic.

The protein belongs to the Casparian strip membrane proteins (CASP) family. Homodimer and heterodimers.

It localises to the cell membrane. This chain is CASP-like protein 3A1, found in Hordeum vulgare subsp. vulgare (Domesticated barley).